The chain runs to 251 residues: 3-dehydroquinate dehydratase (251 aa).

Residues 47–49 and arginine 83 each bind 3-dehydroquinate; that span reads EWR. Catalysis depends on histidine 144, which acts as the Proton donor/acceptor. The Schiff-base intermediate with substrate role is filled by lysine 171. The 3-dehydroquinate site is built by arginine 214, serine 233, and glutamine 237.

Belongs to the type-I 3-dehydroquinase family. As to quaternary structure, homodimer.

The enzyme catalyses 3-dehydroquinate = 3-dehydroshikimate + H2O. It functions in the pathway metabolic intermediate biosynthesis; chorismate biosynthesis; chorismate from D-erythrose 4-phosphate and phosphoenolpyruvate: step 3/7. Involved in the third step of the chorismate pathway, which leads to the biosynthesis of aromatic amino acids. Catalyzes the cis-dehydration of 3-dehydroquinate (DHQ) and introduces the first double bond of the aromatic ring to yield 3-dehydroshikimate. The sequence is that of 3-dehydroquinate dehydratase from Klebsiella pneumoniae (strain 342).